Here is a 193-residue protein sequence, read N- to C-terminus: Ras-like protein 2 (193 aa).

Residue 12–19 (GGGGVGKS) participates in GTP binding. An Effector region motif is present at residues 34–42 (YDPTIEDSY). GTP contacts are provided by residues 59-63 (DTAGQ) and 118-121 (NKCD). Cysteine 190 is subject to Cysteine methyl ester. Cysteine 190 carries S-geranylgeranyl cysteine lipidation. Residues 191-193 (KLL) constitute a propeptide, removed in mature form.

The protein belongs to the small GTPase superfamily. Ras family.

It localises to the cell membrane. The enzyme catalyses GTP + H2O = GDP + phosphate + H(+). Functionally, ras proteins bind GDP/GTP and possess intrinsic GTPase activity. The chain is Ras-like protein 2 (RAS-2) from Physarum polycephalum (Slime mold).